An 809-amino-acid polypeptide reads, in one-letter code: 3',5'-cyclic-AMP phosphodiesterase 4D (809 aa).

Residues 1–107 are disordered; sequence MEAEGSSAPA…SGATGRVRHR (107 aa). Residues His54, Pro59, and Pro63 each carry the phosphoserine modification. A compositionally biased stretch (pro residues) spans 58-89; the sequence is PPPPPPSPQPQPQCPLQPPPPPPLPPPPPPPG. Over residues 90-102 the composition is skewed to low complexity; it reads AARGRYASSGATG. 5 positions are modified to phosphoserine: Ser142, Ser299, Ser301, Ser348, and Ser375. The interval 343 to 364 is disordered; it reads EVEIPSPTQKEKEKKKRPMSQI. In terms of domain architecture, PDEase spans 386 to 715; sequence VKTEQEDVLA…EWYQSTIPQS (330 aa). Lys387 participates in a covalent cross-link: Glycyl lysine isopeptide (Lys-Gly) (interchain with G-Cter in SUMO). His462 acts as the Proton donor in catalysis. Residue His462 participates in 3',5'-cyclic AMP binding. Residue His462 coordinates AMP. Zn(2+) contacts are provided by His466, His502, Asp503, and Asp620. Asp503, Asp620, Asn623, Gln671, and Phe674 together coordinate AMP. Mg(2+) is bound at residue Asp503. Position 503 (Asp503) interacts with Mn(2+). Residues Gln671 and Phe674 each contribute to the 3',5'-cyclic AMP site. Disordered regions lie at residues 710 to 729 and 739 to 809; these read STIPQSPSPAPDDPEEGRQG and TLEE…SPDT. The segment covering 762 to 773 has biased composition (polar residues); it reads CSDSKTLCTQDS. Residues 779–796 show a composition bias toward acidic residues; the sequence is PLDEQVEEEAVGEEEESQ.

Belongs to the cyclic nucleotide phosphodiesterase family. PDE4 subfamily. Homodimer for the long isoforms. Isoforms with truncated N-termini are monomeric. Isoform 3 is part of a ternary complex containing PRKAR2A, PRKAR2B and AKAP9. Interacts with PDE4DIP. Identified in a complex composed of RYR1, PDE4D, PKA, FKBP1A and protein phosphatase 1 (PP1). Isoform 5, isoform N3 and isoform 12 bind RACK1 via their unique N-terminus. Binds ARRB2. Interacts (via N-terminal region) with SHANK2 (via proline-rich region); the interaction is increased in a PKA-dependent manner. Zn(2+) serves as cofactor. The cofactor is Mg(2+). It depends on Mn(2+) as a cofactor. In terms of processing, long isoforms that share a conserved PKA phosphorylation site in the N-terminus are activated by PKA through phosphorylation. Isoform 3 and isoform 7 are activated by phosphorylation (in vitro), but not isoform 6. Isoform N3 and isoform 12 are phosphorylated on Ser-49, Ser-51, Ser-55 and Ser-59. Post-translationally, sumoylation of long isoforms by PIAS4 augments their activation by PKA phosphorylation and represses their inhibition by ERK phosphorylation. Expressed in colonic epithelial cells (at protein level). Widespread; most abundant in skeletal muscle. As to expression, detected in brain. In terms of tissue distribution, detected in brain, placenta, lung and kidney. Detected in heart and skeletal muscle.

It localises to the apical cell membrane. The protein localises to the cytoplasm. It is found in the membrane. Its subcellular location is the cytoskeleton. The protein resides in the microtubule organizing center. It localises to the centrosome. The enzyme catalyses 3',5'-cyclic AMP + H2O = AMP + H(+). Its pathway is purine metabolism; 3',5'-cyclic AMP degradation; AMP from 3',5'-cyclic AMP: step 1/1. With respect to regulation, inhibited by rolipram. Activated by phosphatidic acid. Its function is as follows. Hydrolyzes the second messenger cAMP, which is a key regulator of many important physiological processes. The sequence is that of 3',5'-cyclic-AMP phosphodiesterase 4D from Homo sapiens (Human).